Reading from the N-terminus, the 319-residue chain is Probable arabinan endo-1,5-alpha-L-arabinosidase C (319 aa).

A signal peptide spans 1–16 (MFVYTLIFLFLAAANA). Asp31 acts as the Proton acceptor in catalysis. A glycan (N-linked (GlcNAc...) asparagine) is linked at Asn190. Residue Glu198 is the Proton donor of the active site. The N-linked (GlcNAc...) asparagine glycan is linked to Asn222.

The protein belongs to the glycosyl hydrolase 43 family.

It localises to the secreted. It carries out the reaction Endohydrolysis of (1-&gt;5)-alpha-arabinofuranosidic linkages in (1-&gt;5)-arabinans.. Its pathway is glycan metabolism; L-arabinan degradation. Functionally, endo-1,5-alpha-L-arabinanase involved in degradation of pectin. Its preferred substrate is linear 1,5-alpha-L-arabinan. This is Probable arabinan endo-1,5-alpha-L-arabinosidase C (abnC) from Aspergillus clavatus (strain ATCC 1007 / CBS 513.65 / DSM 816 / NCTC 3887 / NRRL 1 / QM 1276 / 107).